The following is a 367-amino-acid chain: MKASPHRPTKALIHLGAIRQNIQQMGAHIPQGTLKWAVVKANAYGHGAVAVAKAIQDDVDGFCVSNIDEAIELRQAGLSKPILILGVSEIEAVALAKEYDFTLTVAGLEWIQALLDKEVDLTGLTVHLKIDSGMGRIGFREVSEVEQAQDLLQKHGVCVEGIFTHFATADEESDDYFNAQLERFKTILASMKEVPELVHASNSATTLWHVETIFNAVRMGDAMYGLNPSGAVLDLPYDLIPALTLESALVHVKTVPAGACMGYGATYQADSEQVIATVPIGYADGWTRDMQNFSVLVDGQACPIVGRVSMDQITIRLPKLYPLGTKVTLIGSNGDKEITATQVATYRVTINYEVVCLLSDRIPREYY.

The active-site Proton acceptor; specific for D-alanine is the K40. At K40 the chain carries N6-(pyridoxal phosphate)lysine. R136 contacts substrate. The active-site Proton acceptor; specific for L-alanine is Y263. M310 contacts substrate.

This sequence belongs to the alanine racemase family. Pyridoxal 5'-phosphate serves as cofactor.

The catalysed reaction is L-alanine = D-alanine. It participates in amino-acid biosynthesis; D-alanine biosynthesis; D-alanine from L-alanine: step 1/1. In terms of biological role, catalyzes the interconversion of L-alanine and D-alanine. May also act on other amino acids. This Streptococcus pneumoniae (strain 70585) protein is Alanine racemase (alr).